A 254-amino-acid chain; its full sequence is Fructose-1,6-bisphosphatase (254 aa).

Mg(2+)-binding residues include Glu-68, Asp-84, Leu-86, and Asp-87. Residues 87-89 (DGS), Arg-171, Ile-176, and Arg-195 contribute to the substrate site. Asp-202 is a binding site for Mg(2+).

Belongs to the inositol monophosphatase superfamily. FBPase class 4 family. As to quaternary structure, homodimer. Mg(2+) is required as a cofactor.

It catalyses the reaction beta-D-fructose 1,6-bisphosphate + H2O = beta-D-fructose 6-phosphate + phosphate. With respect to regulation, inhibited by Li(+), ADP, ATP and glucose-6-phosphate. Functionally, catalyzes the conversion of D-fructose 1,6-bisphosphate to D-fructose 6-phosphate. In vitro, also has weak activity with inositol-1-phosphate, glucose-1-phosphate and glycerol-2-phosphate. The sequence is that of Fructose-1,6-bisphosphatase from Pyrococcus furiosus (strain ATCC 43587 / DSM 3638 / JCM 8422 / Vc1).